A 566-amino-acid polypeptide reads, in one-letter code: Arginine--tRNA ligase (566 aa).

The 'HIGH' region signature appears at 123 to 133; sequence PNIAKPFHIGH.

Belongs to the class-I aminoacyl-tRNA synthetase family. In terms of assembly, monomer.

Its subcellular location is the cytoplasm. The enzyme catalyses tRNA(Arg) + L-arginine + ATP = L-arginyl-tRNA(Arg) + AMP + diphosphate. The sequence is that of Arginine--tRNA ligase from Clostridioides difficile (strain 630) (Peptoclostridium difficile).